We begin with the raw amino-acid sequence, 195 residues long: Imidazoleglycerol-phosphate dehydratase (195 aa).

The protein belongs to the imidazoleglycerol-phosphate dehydratase family.

Its subcellular location is the cytoplasm. The enzyme catalyses D-erythro-1-(imidazol-4-yl)glycerol 3-phosphate = 3-(imidazol-4-yl)-2-oxopropyl phosphate + H2O. It participates in amino-acid biosynthesis; L-histidine biosynthesis; L-histidine from 5-phospho-alpha-D-ribose 1-diphosphate: step 6/9. This is Imidazoleglycerol-phosphate dehydratase from Deinococcus radiodurans (strain ATCC 13939 / DSM 20539 / JCM 16871 / CCUG 27074 / LMG 4051 / NBRC 15346 / NCIMB 9279 / VKM B-1422 / R1).